The following is a 189-amino-acid chain: Threonylcarbamoyl-AMP synthase (189 aa).

Residues 7-189 form the YrdC-like domain; the sequence is NPRVNYAANM…LLTGQVVRPS (183 aa).

Belongs to the SUA5 family. TsaC subfamily.

The protein resides in the cytoplasm. It catalyses the reaction L-threonine + hydrogencarbonate + ATP = L-threonylcarbamoyladenylate + diphosphate + H2O. In terms of biological role, required for the formation of a threonylcarbamoyl group on adenosine at position 37 (t(6)A37) in tRNAs that read codons beginning with adenine. Catalyzes the conversion of L-threonine, HCO(3)(-)/CO(2) and ATP to give threonylcarbamoyl-AMP (TC-AMP) as the acyladenylate intermediate, with the release of diphosphate. This Cellvibrio japonicus (strain Ueda107) (Pseudomonas fluorescens subsp. cellulosa) protein is Threonylcarbamoyl-AMP synthase.